The following is a 426-amino-acid chain: MSYVNELKSKHGGLTAHIVKTEKFKTVSLIFKMLAPLTKDQVTKRALLPHVLLRGTKSHPKTAGLRSYLDELYGTSVSADLTKKGERHVITFRLEIPNEKYLKDQTPLLEKGLQLLAELVFSPALEGDAFQSQYVAQEKRTLKQRIQAVYDDKMRYSNLRLIQEMCKNDPYALHVNGEIDDVDDITAEQLYETYQSAIQKDQLDLYVVGDVDSNQVQSAIDKYFKTEERTLGMIENNHADEKVQPKEVIDEEDVKQGKLNIGYRTSITYTDQDYPALQVFNGLFGGFSHSKLFINVREKASLAYYAASRIESFKGLLMVMSGIEVKNFEQAVSIIAEQFQAMKNGDFSEQDIAQTKAVIRNQVLETIDTAYGLSEFLYQQAAAQVEIPIEDFLANIENVTKEDIIKAGEKIQLDTTYFLKGTEGAS.

Residues His50 and Glu138 each coordinate Zn(2+).

It belongs to the peptidase M16 family.

The protein is Probable inactive metalloprotease YmfF (ymfF) of Bacillus subtilis (strain 168).